The chain runs to 433 residues: Serine hydroxymethyltransferase (433 aa).

(6S)-5,6,7,8-tetrahydrofolate-binding positions include leucine 132 and glycine 136 to leucine 138. Lysine 241 is subject to N6-(pyridoxal phosphate)lysine.

Belongs to the SHMT family. In terms of assembly, homodimer. Requires pyridoxal 5'-phosphate as cofactor.

Its subcellular location is the cytoplasm. The catalysed reaction is (6R)-5,10-methylene-5,6,7,8-tetrahydrofolate + glycine + H2O = (6S)-5,6,7,8-tetrahydrofolate + L-serine. It functions in the pathway one-carbon metabolism; tetrahydrofolate interconversion. The protein operates within amino-acid biosynthesis; glycine biosynthesis; glycine from L-serine: step 1/1. Its function is as follows. Catalyzes the reversible interconversion of serine and glycine with tetrahydrofolate (THF) serving as the one-carbon carrier. This reaction serves as the major source of one-carbon groups required for the biosynthesis of purines, thymidylate, methionine, and other important biomolecules. Also exhibits THF-independent aldolase activity toward beta-hydroxyamino acids, producing glycine and aldehydes, via a retro-aldol mechanism. This chain is Serine hydroxymethyltransferase, found in Nitrobacter winogradskyi (strain ATCC 25391 / DSM 10237 / CIP 104748 / NCIMB 11846 / Nb-255).